We begin with the raw amino-acid sequence, 238 residues long: TPGSQPQPMDLRVGQRPTVEPPPEPALLTLQHPQRLHRHLFLAGLQQQQRSAEPMRLSMDPPLPELQGGQQEQELRQLLNKDKSKRSAVASSVVKQKLAEVILKKQQAALERTVHPSSPSIPYRTLEPLDTEGAARSVLSSFLPPVPSLPTEPPEHFPLRKTVSEPNLKLRYKPKKSLERRKNPLLRKESAPPSLRRRPAETLGDSSPSSSSTPASGCSSPNDSEHGPNPALGSEADG.

2 disordered regions span residues Thr1–Ala26 and Gln47–Glu72. Residues Ser58 to Pro158 form an interaction with MEF2A region. Ser118 and Ser164 each carry phosphoserine. The interval Pro145 to Gly238 is disordered. Over residues Lys176–Ser190 the composition is skewed to basic and acidic residues. A Phosphoserine; by PKD/PRKD2 modification is found at Ser190. Residues Ser206 to Pro221 are compositionally biased toward low complexity.

Belongs to the histone deacetylase family. HD type 2 subfamily. Interacts with HDAC1, HDAC2, HDAC3, HDAC4, HDAC5, NCOR1, NCOR2, SIN3A, SIN3B, RBBP4, RBBP7, MTA1L1, SAP30 and MBD3. Interacts with KAT5 and EDNRA. Interacts with the 14-3-3 protein YWHAE, MEF2A, MEF2B and MEF2C. Interacts with ZMYND15. Interacts with KDM5B. Interacts with PML. Interacts with FOXP3. Interacts with RARA. May be phosphorylated by CaMK1. Phosphorylated by the PKC kinases PKN1 and PKN2, impairing nuclear import. Phosphorylation at Ser-164 by MARK2, MARK3 and PRKD1 promotes interaction with 14-3-3 proteins and export from the nucleus. Phosphorylation at Ser-164 is a prerequisite for phosphorylation at Ser-190.

It localises to the nucleus. The protein resides in the cytoplasm. The catalysed reaction is N(6)-acetyl-L-lysyl-[histone] + H2O = L-lysyl-[histone] + acetate. It carries out the reaction N(6)-acetyl-L-lysyl-[protein] + H2O = L-lysyl-[protein] + acetate. In terms of biological role, responsible for the deacetylation of lysine residues on the N-terminal part of the core histones (H2A, H2B, H3 and H4). Histone deacetylation gives a tag for epigenetic repression and plays an important role in transcriptional regulation, cell cycle progression and developmental events. Histone deacetylases act via the formation of large multiprotein complexes. Involved in muscle maturation by repressing transcription of myocyte enhancer factors such as MEF2A, MEF2B and MEF2C. During muscle differentiation, it shuttles into the cytoplasm, allowing the expression of myocyte enhancer factors. May be involved in Epstein-Barr virus (EBV) latency, possibly by repressing the viral BZLF1 gene. Positively regulates the transcriptional repressor activity of FOXP3. Serves as a corepressor of RARA, causing its deacetylation and inhibition of RARE DNA element binding. In association with RARA, plays a role in the repression of microRNA-10a and thereby in the inflammatory response. Also acetylates non-histone proteins, such as ALKBH5. This Rattus norvegicus (Rat) protein is Histone deacetylase 7 (Hdac7).